Reading from the N-terminus, the 215-residue chain is Peptide methionine sulfoxide reductase MsrA (215 aa).

C57 is an active-site residue.

Belongs to the MsrA Met sulfoxide reductase family.

The catalysed reaction is L-methionyl-[protein] + [thioredoxin]-disulfide + H2O = L-methionyl-(S)-S-oxide-[protein] + [thioredoxin]-dithiol. It catalyses the reaction [thioredoxin]-disulfide + L-methionine + H2O = L-methionine (S)-S-oxide + [thioredoxin]-dithiol. Has an important function as a repair enzyme for proteins that have been inactivated by oxidation. Catalyzes the reversible oxidation-reduction of methionine sulfoxide in proteins to methionine. The chain is Peptide methionine sulfoxide reductase MsrA from Saccharophagus degradans (strain 2-40 / ATCC 43961 / DSM 17024).